Reading from the N-terminus, the 549-residue chain is Speedy protein E3 (549 aa).

The span at 1 to 15 (MTSHQPQPQEEQSPQ) shows a compositional bias: low complexity. Disordered stretches follow at residues 1–74 (MTSH…EPEE), 126–145 (KREC…APEP), 188–218 (SPPR…APEP), 261–291 (SPPR…APEP), and 334–364 (SPPR…APEP). Acidic residues-rich tracts occupy residues 58–74 (DESD…EPEE), 131–145 (DESD…APEP), 204–218 (DESD…APEP), 277–291 (DESD…APEP), and 350–364 (DESD…APEP).

This sequence belongs to the Speedy/Ringo family. In terms of tissue distribution, predominantly expressed in testis and spleen.

In Homo sapiens (Human), this protein is Speedy protein E3.